The sequence spans 375 residues: Probable neutral protease 2 homolog ARB_05817 (375 aa).

Positions 1–19 (MQVIVALAALGSLAAPALG) are cleaved as a signal peptide. A propeptide spanning residues 20–189 (FSIPRGVPVS…RGPLTRINKR (170 aa)) is cleaved from the precursor. 2 disulfides stabilise this stretch: Cys197–Cys267 and Cys274–Cys292. Position 317 (His317) interacts with Zn(2+). Glu318 is a catalytic residue. Residues His321 and Asp332 each contribute to the Zn(2+) site.

This sequence belongs to the peptidase M35 family. The cofactor is Zn(2+).

The protein localises to the secreted. It carries out the reaction Preferential cleavage of bonds with hydrophobic residues in P1'. Also 3-Asn-|-Gln-4 and 8-Gly-|-Ser-9 bonds in insulin B chain.. In terms of biological role, probable secreted metalloprotease that shows high activities on basic nuclear substrates such as histone and protamine. May be involved in virulence. The chain is Probable neutral protease 2 homolog ARB_05817 from Arthroderma benhamiae (strain ATCC MYA-4681 / CBS 112371) (Trichophyton mentagrophytes).